Here is a 20-residue protein sequence, read N- to C-terminus: Cytochrome c oxidase subunit 7B-liver, mitochondrial (20 aa).

Belongs to the cytochrome c oxidase VIIb family. Component of the cytochrome c oxidase (complex IV, CIV), a multisubunit enzyme composed of 14 subunits. The complex is composed of a catalytic core of 3 subunits MT-CO1, MT-CO2 and MT-CO3, encoded in the mitochondrial DNA, and 11 supernumerary subunits COX4I, COX5A, COX5B, COX6A, COX6B, COX6C, COX7A, COX7B, COX7C, COX8 and NDUFA4, which are encoded in the nuclear genome. The complex exists as a monomer or a dimer and forms supercomplexes (SCs) in the inner mitochondrial membrane with NADH-ubiquinone oxidoreductase (complex I, CI) and ubiquinol-cytochrome c oxidoreductase (cytochrome b-c1 complex, complex III, CIII), resulting in different assemblies (supercomplex SCI(1)III(2)IV(1) and megacomplex MCI(2)III(2)IV(2)).

Its subcellular location is the mitochondrion inner membrane. It carries out the reaction 4 Fe(II)-[cytochrome c] + O2 + 8 H(+)(in) = 4 Fe(III)-[cytochrome c] + 2 H2O + 4 H(+)(out). The protein operates within energy metabolism; oxidative phosphorylation. Component of the cytochrome c oxidase, the last enzyme in the mitochondrial electron transport chain which drives oxidative phosphorylation. The respiratory chain contains 3 multisubunit complexes succinate dehydrogenase (complex II, CII), ubiquinol-cytochrome c oxidoreductase (cytochrome b-c1 complex, complex III, CIII) and cytochrome c oxidase (complex IV, CIV), that cooperate to transfer electrons derived from NADH and succinate to molecular oxygen, creating an electrochemical gradient over the inner membrane that drives transmembrane transport and the ATP synthase. Cytochrome c oxidase is the component of the respiratory chain that catalyzes the reduction of oxygen to water. Electrons originating from reduced cytochrome c in the intermembrane space (IMS) are transferred via the dinuclear copper A center (CU(A)) of subunit 2 and heme A of subunit 1 to the active site in subunit 1, a binuclear center (BNC) formed by heme A3 and copper B (CU(B)). The BNC reduces molecular oxygen to 2 water molecules using 4 electrons from cytochrome c in the IMS and 4 protons from the mitochondrial matrix. In Thunnus obesus (Bigeye tuna), this protein is Cytochrome c oxidase subunit 7B-liver, mitochondrial.